Reading from the N-terminus, the 135-residue chain is Small ribosomal subunit protein uS11 (135 aa).

This sequence belongs to the universal ribosomal protein uS11 family. Part of the 30S ribosomal subunit. Interacts with proteins S7 and S18. Binds to IF-3.

Its function is as follows. Located on the platform of the 30S subunit, it bridges several disparate RNA helices of the 16S rRNA. Forms part of the Shine-Dalgarno cleft in the 70S ribosome. The sequence is that of Small ribosomal subunit protein uS11 from Corynebacterium urealyticum (strain ATCC 43042 / DSM 7109).